We begin with the raw amino-acid sequence, 77 residues long: Putative defensin-like protein 118 (77 aa).

Positions 1–25 (MSKSTILAIFMIVLVLGKVTKETQG) are cleaved as a signal peptide. Cystine bridges form between C29/C75, C39/C58, C44/C69, and C48/C71.

Belongs to the DEFL family.

It is found in the secreted. This Arabidopsis thaliana (Mouse-ear cress) protein is Putative defensin-like protein 118 (LCR52).